Here is an 83-residue protein sequence, read N- to C-terminus: Normal mucosa of esophagus-specific gene 1 protein (83 aa).

This sequence belongs to the complex I NDUFA4 subunit family. In terms of tissue distribution, expressed mainly in stomach, placenta, small intestine and colon, as well as in normal mucosa of esophagus. Down-regulated in esophageal squamous cell carcinoma.

Its subcellular location is the nucleus. The polypeptide is Normal mucosa of esophagus-specific gene 1 protein (NMES1) (Homo sapiens (Human)).